We begin with the raw amino-acid sequence, 226 residues long: EEF1A lysine methyltransferase 3 (226 aa).

Residues W57, 83-85 (GAG), D104, W133, and A150 contribute to the S-adenosyl-L-methionine site.

It belongs to the methyltransferase superfamily. METTL21 family. In terms of assembly, interacts with members of the heat shock protein 70 and 90 families and of the TCP-1 chaperonin family, as well as with HSPD1, STIP1 and tubulin; at least some of these proteins may be methylation substrates.

It localises to the cytoplasm. Its subcellular location is the cytoskeleton. The protein resides in the microtubule organizing center. It is found in the centrosome. It carries out the reaction L-lysyl-[protein] + 3 S-adenosyl-L-methionine = N(6),N(6),N(6)-trimethyl-L-lysyl-[protein] + 3 S-adenosyl-L-homocysteine + 3 H(+). It catalyses the reaction L-lysyl-[protein] + S-adenosyl-L-methionine = N(6)-methyl-L-lysyl-[protein] + S-adenosyl-L-homocysteine + H(+). The catalysed reaction is N(6)-methyl-L-lysyl-[protein] + S-adenosyl-L-methionine = N(6),N(6)-dimethyl-L-lysyl-[protein] + S-adenosyl-L-homocysteine + H(+). The enzyme catalyses N(6),N(6)-dimethyl-L-lysyl-[protein] + S-adenosyl-L-methionine = N(6),N(6),N(6)-trimethyl-L-lysyl-[protein] + S-adenosyl-L-homocysteine + H(+). Protein-lysine methyltransferase that selectively mono-, di- and trimethylates 'Lys-165' of the translation elongation factors EEF1A1 and EEF1A2 in an aminoacyl-tRNA and GTP-dependent manner. EEF1A1 methylation by EEF1AKMT3 is dynamic as well as inducible by stress conditions, such as ER-stress, and plays a regulatory role on mRNA translation. The sequence is that of EEF1A lysine methyltransferase 3 from Homo sapiens (Human).